The following is a 2033-amino-acid chain: Envoplakin (2033 aa).

Low complexity predominate over residues 1–27; the sequence is MFKGLSKGSQGKGSPKGSPAKGSPKGS. Disordered regions lie at residues 1 to 37 and 65 to 85; these read MFKG…AATQ and QQDR…ETGR. A globular 1 region spans residues 1–841; the sequence is MFKGLSKGSQ…LEPTLAVSAP (841 aa). The segment at 12–28 is 4 X 4 AA tandem repeats of K-G-S-P; it reads KGSPKGSPAKGSPKGSP. The span at 71–84 shows a compositional bias: polar residues; that stretch reads SEQSQALQHQQETG. A Spectrin repeat occupies 229–330; that stretch reads YTHLQGCTRQ…LCICQETQLQ (102 aa). Basic and acidic residues predominate over residues 388–401; that stretch reads TERATGDLQRRSRD. 2 disordered regions span residues 388–418 and 891–916; these read TERA…PLHV and SEDI…ESEA. In terms of domain architecture, SH3 spans 413 to 470; that stretch reads QQPLHVDSICDWDSGEVQLLQGERYKLVDNTDPHAWVVQGPGGETKRAPAACFCIPAP. A central fibrous rod domain region spans residues 842 to 1673; that stretch reads KRPRVAPLQE…AKVSREELSQ (832 aa). Positions 845–1135 form a coiled coil; it reads RVAPLQESIQ…AISSVEPKVI (291 aa). Residues 891–902 show a composition bias toward basic and acidic residues; that stretch reads SEDIRRTHDAKQ. A Plectin 1 repeat occupies 1185–1226; sequence KQRPKVQLQERVHEIFQVDPETEQEITRLKAKLQEMAGKRSG. Ser1575 carries the phosphoserine modification. Low complexity predominate over residues 1614-1623; sequence QEESKLLSQK. The segment at 1614-1636 is disordered; that stretch reads QEESKLLSQKTESERQKAAQRGQ. The tract at residues 1674-2033 is globular 2; the sequence is ETQTRETNLS…ASPTVPRSLR (360 aa). Residues 1678–1713 form a Plectin 2 repeat; that stretch reads RETNLSTKISILEPETGKDMSPYEAYKRGIIDRGQY. Ser1799 carries the phosphoserine modification. 5 Plectin repeats span residues 1818-1855, 1856-1893, 1894-1931, 1932-1969, and 1970-2007; these read LGLG…PITG, QKLL…NTST, QRLL…RESV, LPHL…EELA, and QLLQ…PLSG. Ser2025 carries the post-translational modification Phosphoserine.

This sequence belongs to the plakin or cytolinker family. In terms of assembly, may form a homodimer or a heterodimer with PPL. Exclusively expressed in stratified squamous epithelia.

It is found in the cell junction. The protein resides in the desmosome. Its subcellular location is the cornified envelope. The protein localises to the cytoplasm. It localises to the cytoskeleton. Functionally, component of the cornified envelope of keratinocytes. May link the cornified envelope to desmosomes and intermediate filaments. The sequence is that of Envoplakin (EVPL) from Homo sapiens (Human).